The primary structure comprises 253 residues: Indole-3-glycerol phosphate synthase (253 aa).

Belongs to the TrpC family.

The enzyme catalyses 1-(2-carboxyphenylamino)-1-deoxy-D-ribulose 5-phosphate + H(+) = (1S,2R)-1-C-(indol-3-yl)glycerol 3-phosphate + CO2 + H2O. The protein operates within amino-acid biosynthesis; L-tryptophan biosynthesis; L-tryptophan from chorismate: step 4/5. This chain is Indole-3-glycerol phosphate synthase, found in Bacillus cereus (strain ZK / E33L).